Here is a 419-residue protein sequence, read N- to C-terminus: Probable sodium/metabolite cotransporter BASS2, chloroplastic (419 aa).

A chloroplast-targeting transit peptide spans 1 to 45 (MAASTTCPARSMASVSRALRPRPHAAIASAAVRTAARLGGGLGIV). 9 helical membrane-spanning segments follow: residues 106-126 (IVEL…IIGI), 137-157 (TDLF…TLTF), 170-190 (VGVG…AIAM), 194-214 (LSAP…GQAS), 225-245 (VALS…MTPL), 259-279 (AAGL…VGVL), 291-311 (IISI…ASPI), 323-343 (GQLI…GYWL), and 384-404 (VPSA…AVFW).

This sequence belongs to the bile acid:sodium symporter (BASS) (TC 2.A.28) family.

The protein resides in the membrane. It localises to the plastid. Its subcellular location is the chloroplast envelope. In terms of biological role, may function as sodium-coupled metabolite transporter across the chloroplast envelope. The chain is Probable sodium/metabolite cotransporter BASS2, chloroplastic (BASS2) from Oryza sativa subsp. japonica (Rice).